The sequence spans 227 residues: Enolase-phosphatase E1 (227 aa).

Belongs to the HAD-like hydrolase superfamily. MasA/MtnC family. In terms of assembly, monomer. It depends on Mg(2+) as a cofactor.

It catalyses the reaction 5-methylsulfanyl-2,3-dioxopentyl phosphate + H2O = 1,2-dihydroxy-5-(methylsulfanyl)pent-1-en-3-one + phosphate. Its pathway is amino-acid biosynthesis; L-methionine biosynthesis via salvage pathway; L-methionine from S-methyl-5-thio-alpha-D-ribose 1-phosphate: step 3/6. It functions in the pathway amino-acid biosynthesis; L-methionine biosynthesis via salvage pathway; L-methionine from S-methyl-5-thio-alpha-D-ribose 1-phosphate: step 4/6. Functionally, bifunctional enzyme that catalyzes the enolization of 2,3-diketo-5-methylthiopentyl-1-phosphate (DK-MTP-1-P) into the intermediate 2-hydroxy-3-keto-5-methylthiopentenyl-1-phosphate (HK-MTPenyl-1-P), which is then dephosphorylated to form the acireductone 1,2-dihydroxy-3-keto-5-methylthiopentene (DHK-MTPene). This Pseudomonas savastanoi pv. phaseolicola (strain 1448A / Race 6) (Pseudomonas syringae pv. phaseolicola (strain 1448A / Race 6)) protein is Enolase-phosphatase E1.